Here is a 93-residue protein sequence, read N- to C-terminus: Defensin-like protein 229 (93 aa).

A signal peptide spans 1–19 (MKSTTLFMVSCVLIFCVLS). Disulfide bonds link cysteine 38-cysteine 93, cysteine 48-cysteine 72, cysteine 56-cysteine 84, and cysteine 70-cysteine 86.

Belongs to the DEFL family. As to expression, flower buds.

It is found in the secreted. The protein is Defensin-like protein 229 (SCRL27) of Arabidopsis thaliana (Mouse-ear cress).